Consider the following 353-residue polypeptide: MTIAFGRFIKEENDLFDIMDDWLRRDRFVFVGWSGLLLFPCAYFALGGWFTGTTFVTSWYTHGLASSYLEGCNFLTAAVSTPANSLAHSLLLLWGPEAQGDFTRWCQLGGLWTFVALHGAFGLIGFMLRQFELARSVQLRPYNAIAFSAPIAVFVSVFLIYPLGQSGWFFAPSFGVAAIFRFILFFQGFHNWTLNPFHMMGVAGVLGAALLCAIHGATVENTLFEDGDGANTFRAFNPTQAEETYSMVTANRFWSQIFGVAFSNKRWLHFFMLFVPVTGLWMSAIGVVGLALNLRAYDFVSQEIRAAEDPEFETFYTKNILLNEGIRAWMAAQDQPHENLIFPEEVLPRGNAL.

Threonine 2 is subject to N-acetylthreonine. Threonine 2 carries the phosphothreonine modification. A helical transmembrane segment spans residues 41–61 (CAYFALGGWFTGTTFVTSWYT). Histidine 118 lines the chlorophyll a pocket. The chain crosses the membrane as a helical span at residues 125-141 (GFMLRQFELARSVQLRP). Positions 130 and 143 each coordinate pheophytin a. The helical transmembrane segment at 153 to 166 (VFVSVFLIYPLGQS) threads the bilayer. A chlorophyll a-binding site is contributed by histidine 198. A helical membrane pass occupies residues 208 to 228 (AALLCAIHGATVENTLFEDGD). Histidine 215 and phenylalanine 262 together coordinate a plastoquinone. Histidine 215 is a Fe cation binding site. A Fe cation-binding site is contributed by histidine 269. A helical membrane pass occupies residues 279–295 (GLWMSAIGVVGLALNLR).

Belongs to the reaction center PufL/M/PsbA/D family. PSII is composed of 1 copy each of membrane proteins PsbA, PsbB, PsbC, PsbD, PsbE, PsbF, PsbH, PsbI, PsbJ, PsbK, PsbL, PsbM, PsbT, PsbX, PsbY, PsbZ, Psb30/Ycf12, at least 3 peripheral proteins of the oxygen-evolving complex and a large number of cofactors. It forms dimeric complexes. The D1/D2 heterodimer binds P680, chlorophylls that are the primary electron donor of PSII, and subsequent electron acceptors. It shares a non-heme iron and each subunit binds pheophytin, quinone, additional chlorophylls, carotenoids and lipids. There is also a Cl(-1) ion associated with D1 and D2, which is required for oxygen evolution. The PSII complex binds additional chlorophylls, carotenoids and specific lipids. serves as cofactor.

The protein localises to the plastid. The protein resides in the chloroplast thylakoid membrane. The catalysed reaction is 2 a plastoquinone + 4 hnu + 2 H2O = 2 a plastoquinol + O2. Photosystem II (PSII) is a light-driven water:plastoquinone oxidoreductase that uses light energy to abstract electrons from H(2)O, generating O(2) and a proton gradient subsequently used for ATP formation. It consists of a core antenna complex that captures photons, and an electron transfer chain that converts photonic excitation into a charge separation. The D1/D2 (PsbA/PsbD) reaction center heterodimer binds P680, the primary electron donor of PSII as well as several subsequent electron acceptors. D2 is needed for assembly of a stable PSII complex. The sequence is that of Photosystem II D2 protein from Phalaenopsis aphrodite subsp. formosana (Moth orchid).